The sequence spans 83 residues: NAD(P)H-quinone oxidoreductase subunit L (83 aa).

2 helical membrane passes run 18-38 and 53-73; these read IGGY…LLFF and FSVY…APFL.

It belongs to the complex I NdhL subunit family. In terms of assembly, NDH-1 can be composed of about 15 different subunits; different subcomplexes with different compositions have been identified which probably have different functions.

The protein resides in the cellular thylakoid membrane. The catalysed reaction is a plastoquinone + NADH + (n+1) H(+)(in) = a plastoquinol + NAD(+) + n H(+)(out). It carries out the reaction a plastoquinone + NADPH + (n+1) H(+)(in) = a plastoquinol + NADP(+) + n H(+)(out). Its function is as follows. NDH-1 shuttles electrons from an unknown electron donor, via FMN and iron-sulfur (Fe-S) centers, to quinones in the respiratory and/or the photosynthetic chain. The immediate electron acceptor for the enzyme in this species is believed to be plastoquinone. Couples the redox reaction to proton translocation, and thus conserves the redox energy in a proton gradient. Cyanobacterial NDH-1 also plays a role in inorganic carbon-concentration. This Synechococcus sp. (strain CC9311) protein is NAD(P)H-quinone oxidoreductase subunit L.